A 173-amino-acid chain; its full sequence is Photosystem I assembly protein Ycf3 (173 aa).

3 TPR repeats span residues 35–68, 72–105, and 120–153; these read AFVY…EDDA, SYIL…NPNL, and GERA…APNN.

The protein belongs to the Ycf3 family.

It is found in the cellular thylakoid membrane. In terms of biological role, essential for the assembly of the photosystem I (PSI) complex. May act as a chaperone-like factor to guide the assembly of the PSI subunits. This is Photosystem I assembly protein Ycf3 from Gloeothece citriformis (strain PCC 7424) (Cyanothece sp. (strain PCC 7424)).